Reading from the N-terminus, the 129-residue chain is Histone H2B.1 (129 aa).

Positions 1-17 (MSAEKKPASKAPAEKKP) are enriched in basic and acidic residues. The segment at 1 to 35 (MSAEKKPASKAPAEKKPAAKKTAPSADGKKRTKAR) is disordered. N6-acetyllysine; alternate is present on residues K5 and K6. Glycyl lysine isopeptide (Lys-Gly) (interchain with G-Cter in SUMO); alternate cross-links involve residues K5 and K6. S9 is modified (phosphoserine). Residue K10 is modified to N6-acetyllysine. K15 is subject to N6-acetyllysine; alternate. Residue K15 forms a Glycyl lysine isopeptide (Lys-Gly) (interchain with G-Cter in SUMO); alternate linkage. A Glycyl lysine isopeptide (Lys-Gly) (interchain with G-Cter in SUMO) cross-link involves residue K16. A Glycyl lysine isopeptide (Lys-Gly) (interchain with G-Cter in ubiquitin) cross-link involves residue K122.

The protein belongs to the histone H2B family. In terms of assembly, the nucleosome is a histone octamer containing two molecules each of H2A, H2B, H3 and H4 assembled in one H3-H4 heterotetramer and two H2A-H2B heterodimers. The octamer wraps approximately 147 bp of DNA. Monoubiquitinated by the UBC2-BRE1 complex to form H2BK123ub1. H2BK123ub1 gives a specific tag for epigenetic transcriptional activation and is also prerequisite for H3K4me and H3K79me formation. H2BK123ub1 also modulates the formation of double-strand breaks during meiosis and is a prerequisite for DNA-damage checkpoint activation. Post-translationally, phosphorylated by STE20 to form H2BS10ph during progression through meiotic prophase. May be correlated with chromosome condensation. In terms of processing, acetylated by GCN5 to form H2BK11ac and H2BK16ac. H2BK16ac can also be formed by ESA1. Acetylation of N-terminal lysines and particularly formation of H2BK11acK16ac has a positive effect on transcription. Sumoylation to form H2BK6su or H2BK7su, and probably also H2BK16su or H2BK17su, occurs preferentially near the telomeres and represses gene transcription.

The protein resides in the nucleus. It localises to the chromosome. Core component of nucleosome. Nucleosomes wrap and compact DNA into chromatin, limiting DNA accessibility to the cellular machineries which require DNA as a template. Histones thereby play a central role in transcription regulation, DNA repair, DNA replication and chromosomal stability. DNA accessibility is regulated via a complex set of post-translational modifications of histones, also called histone code, and nucleosome remodeling. This chain is Histone H2B.1 (HTB1), found in Candida glabrata (strain ATCC 2001 / BCRC 20586 / JCM 3761 / NBRC 0622 / NRRL Y-65 / CBS 138) (Yeast).